Reading from the N-terminus, the 304-residue chain is Small ribosomal subunit protein uS2 (304 aa).

Ser-2 carries the N-acetylserine modification. Laminin-binding stretches follow at residues 161–180 (IPCN…MLAR) and 205–229 (RDPE…EFQG). 5 [DE]-W-[ST] repeats span residues 230–232 (EWS), 245–247 (DWS), 275–277 (DWS), 284–286 (DWS), and 302–304 (DWS). The tract at residues 242–304 (EVADWSEGVA…DWGGATSDWS (63 aa)) is laminin-binding. Residues 257–304 (IQQFPAGTPAPAPAVKTEDWSTQPATEDWSTAPTAQASDWGGATSDWS) form a disordered region. Positions 276 to 293 (WSTQPATEDWSTAPTAQA) are enriched in polar residues.

This sequence belongs to the universal ribosomal protein uS2 family. Monomer (37LRP) and homodimer (67LR). Component of the small ribosomal subunit. Mature ribosomes consist of a small (40S) and a large (60S) subunit. The 40S subunit contains about 33 different proteins and 1 molecule of RNA (18S). The 60S subunit contains about 49 different proteins and 3 molecules of RNA (28S, 5.8S and 5S). Interacts with rps21. Interacts with several laminins including at least lamb1. Interacts with mdk. Post-translationally, acylated. Acylation may be a prerequisite for conversion of the monomeric 37 kDa laminin receptor precursor (37LRP) to the mature dimeric 67 kDa laminin receptor (67LR), and may provide a mechanism for membrane association. In terms of processing, cleaved by stromelysin-3 (ST3) at the cell surface. Cleavage by stromelysin-3 may be a mechanism to alter cell-extracellular matrix interactions.

Its subcellular location is the cell membrane. It is found in the cytoplasm. It localises to the nucleus. Required for the assembly and/or stability of the 40S ribosomal subunit. Required for the processing of the 20S rRNA-precursor to mature 18S rRNA in a late step of the maturation of 40S ribosomal subunits. Also functions as a cell surface receptor for laminin. Plays a role in cell adhesion to the basement membrane and in the consequent activation of signaling transduction pathways. May play a role in cell fate determination and tissue morphogenesis. The chain is Small ribosomal subunit protein uS2 (rpsa) from Sparus aurata (Gilthead sea bream).